A 504-amino-acid chain; its full sequence is Probable ergothioneine transporter EgtUBC (504 aa).

Residues 19-198 form the ABC transmembrane type-1 domain; sequence LVQHIQISFV…LLAILFDFLL (180 aa). 6 helical membrane passes run 25–44, 57–74, 81–97, 146–170, 179–198, and 210–229; these read ISFV…GIYL, VAAI…GLLI, IVPA…LPIL, MVLI…LILL, LILL…DFLL, and IITI…VPYF. The ergothioneine binding domain stretch occupies residues 231–504; the sequence is SDKKEITIAG…DYLKDQGIIK (274 aa).

It in the N-terminal section; belongs to the binding-protein-dependent transport system permease family. This sequence in the C-terminal section; belongs to the OsmX family. In terms of assembly, the complex is probably composed of at least an ATP-binding protein (EgtUA) and a transmembrane protein (EgtUBC).

It is found in the membrane. Its function is as follows. Part of an ABC transporter complex EgtU required for the uptake of ergothioneine (EGT), a natural low-molecular weight (LMW) thiol antioxidant. Responsible for the translocation of the substrate across the membrane. Also contains a C-terminal periplasmic solute-binding domain (SBD) which binds to EGT with sub-micromolar affinity. Does not bind glycine betaine, carnitine, choline, proline, or cholate. Plays a role in bile acid tolerance. Dispensable for choline uptake. Probably not involved in betaine, carnitine or choline mediated osmo- or chill tolerance. Plays a role in enhancing virulence in mice. This is Probable ergothioneine transporter EgtUBC from Listeria monocytogenes serovar 1/2a (strain ATCC BAA-679 / EGD-e).